The chain runs to 202 residues: Glycerol-3-phosphate acyltransferase (202 aa).

Transmembrane regions (helical) follow at residues 2–22, 54–74, 88–108, 120–140, 141–161, and 162–182; these read MIVIMLILSYLIGAFPSGYVI, FLVTFLDIFKGFIVVFFPLWL, NGLIVGAFAILGHVYPVYLGF, VILGVNPVLLLILAAIFFGIL, YLTKYVSLSSIIASICCVIGA, and LLIRDYILFIVSIGVGVLLII.

It belongs to the PlsY family. As to quaternary structure, probably interacts with PlsX.

Its subcellular location is the cell membrane. The catalysed reaction is an acyl phosphate + sn-glycerol 3-phosphate = a 1-acyl-sn-glycero-3-phosphate + phosphate. It functions in the pathway lipid metabolism; phospholipid metabolism. Its function is as follows. Catalyzes the transfer of an acyl group from acyl-phosphate (acyl-PO(4)) to glycerol-3-phosphate (G3P) to form lysophosphatidic acid (LPA). This enzyme utilizes acyl-phosphate as fatty acyl donor, but not acyl-CoA or acyl-ACP. This Staphylococcus saprophyticus subsp. saprophyticus (strain ATCC 15305 / DSM 20229 / NCIMB 8711 / NCTC 7292 / S-41) protein is Glycerol-3-phosphate acyltransferase.